Reading from the N-terminus, the 541-residue chain is Membrane protein insertase YidC (541 aa).

5 helical membrane passes run 7 to 27, 346 to 368, 416 to 436, 454 to 474, and 495 to 515; these read LLVIALLFISFLVYQQWQLDY, IVQNWGLAIIGVTLVVKAILYPL, LGGCLPILLQMPIFIALYWTF, LSAQDPYYILPILMGASMFLL, and PLIFMVFFLWFPSGLVLYWLV.

It belongs to the OXA1/ALB3/YidC family. Type 1 subfamily. In terms of assembly, interacts with the Sec translocase complex via SecD. Specifically interacts with transmembrane segments of nascent integral membrane proteins during membrane integration.

It is found in the cell inner membrane. Required for the insertion and/or proper folding and/or complex formation of integral membrane proteins into the membrane. Involved in integration of membrane proteins that insert both dependently and independently of the Sec translocase complex, as well as at least some lipoproteins. Aids folding of multispanning membrane proteins. This chain is Membrane protein insertase YidC, found in Pasteurella multocida (strain Pm70).